Here is a 64-residue protein sequence, read N- to C-terminus: LTCKTCPFTTCPNSESCPGGQSICYQRKWEEHRGERIERRCVANCPAFGSHDTSLLCCTRDNCN.

5 disulfide bridges follow: cysteine 3/cysteine 24, cysteine 6/cysteine 11, cysteine 17/cysteine 41, cysteine 45/cysteine 57, and cysteine 58/cysteine 63.

This sequence belongs to the three-finger toxin family. Ancestral subfamily. As to expression, expressed by the venom gland.

The protein localises to the secreted. Functionally, allosteric modulator of the GABA(A) receptor (GABR), possibly increasing receptor affinity for the agonist, thus enhancing receptor opening and macroscopic desensitization. In vivo, intracerebroventricular injection into mice results in periods of reduced basal activity, followed by bursts of intense seizures and death. The protein is Micrurotoxin 1 of Micrurus mipartitus (Red-tailed coral snake).